The following is a 166-amino-acid chain: Small ribosomal subunit protein uS5 (166 aa).

The S5 DRBM domain occupies 11 to 74; sequence LQEKLIAVNR…EQAKRNLSKV (64 aa).

Belongs to the universal ribosomal protein uS5 family. Part of the 30S ribosomal subunit. Contacts proteins S4 and S8.

With S4 and S12 plays an important role in translational accuracy. In terms of biological role, located at the back of the 30S subunit body where it stabilizes the conformation of the head with respect to the body. The protein is Small ribosomal subunit protein uS5 of Aeromonas salmonicida (strain A449).